Consider the following 167-residue polypeptide: Swarming motility protein SwrB (167 aa).

Residues 63–105 (IENKASSASQSDEESQKSGLQTSETYQERDPVQEAENLPEHIE) form a disordered region. Over residues 88 to 105 (YQERDPVQEAENLPEHIE) the composition is skewed to basic and acidic residues.

In terms of biological role, required for swarming motility and for maximal sigma-D activity. In Bacillus subtilis (strain 168), this protein is Swarming motility protein SwrB (swrB).